The primary structure comprises 22 residues: Peptide PGLa-R1 (22 aa).

Leucine amide is present on Leu22.

In terms of tissue distribution, expressed by the skin glands.

The protein resides in the secreted. Functionally, antimicrobial peptide. The protein is Peptide PGLa-R1 of Xenopus ruwenzoriensis (Uganda clawed frog).